Here is an 841-residue protein sequence, read N- to C-terminus: Probable outer membrane protein pmp2 (841 aa).

Residues 1 to 24 (MKIPLRFLLISLVPTLSMSNLLGA) form the signal peptide. One can recognise an Autotransporter domain in the interval 537–841 (GAPYEKRFWV…NVDAGSKIKF (305 aa)).

This sequence belongs to the PMP outer membrane protein family.

The protein resides in the secreted. It localises to the cell wall. The protein localises to the cell outer membrane. This Chlamydia pneumoniae (Chlamydophila pneumoniae) protein is Probable outer membrane protein pmp2 (pmp2).